A 314-amino-acid chain; its full sequence is Homoserine kinase (314 aa).

An ATP-binding site is contributed by 95 to 105 (PHSRGLGSSAS).

The protein belongs to the GHMP kinase family. Homoserine kinase subfamily.

The protein resides in the cytoplasm. It carries out the reaction L-homoserine + ATP = O-phospho-L-homoserine + ADP + H(+). It participates in amino-acid biosynthesis; L-threonine biosynthesis; L-threonine from L-aspartate: step 4/5. Its function is as follows. Catalyzes the ATP-dependent phosphorylation of L-homoserine to L-homoserine phosphate. The protein is Homoserine kinase of Mycobacterium ulcerans (strain Agy99).